The chain runs to 177 residues: Large ribosomal subunit protein uL6 (177 aa).

A compositionally biased stretch (basic and acidic residues) spans 152–171 (RPPEPYKGKGVRYDDEEVRR). The interval 152 to 177 (RPPEPYKGKGVRYDDEEVRRKEAKKK) is disordered.

The protein belongs to the universal ribosomal protein uL6 family. Part of the 50S ribosomal subunit.

This protein binds to the 23S rRNA, and is important in its secondary structure. It is located near the subunit interface in the base of the L7/L12 stalk, and near the tRNA binding site of the peptidyltransferase center. This is Large ribosomal subunit protein uL6 from Shewanella sp. (strain ANA-3).